The chain runs to 105 residues: Insulin (105 aa).

The first 24 residues, 1–24 (MALWTRLVPLLALLALWAPAPAHA), serve as a signal peptide directing secretion. Disulfide bonds link Cys-31–Cys-91, Cys-43–Cys-104, and Cys-90–Cys-95. Positions 57–82 (EVEGPQVGALELAGGPGAGGLEGPPQ) are cleaved as a propeptide — c peptide.

Belongs to the insulin family. Heterodimer of a B chain and an A chain linked by two disulfide bonds.

It localises to the secreted. In terms of biological role, insulin decreases blood glucose concentration. It increases cell permeability to monosaccharides, amino acids and fatty acids. It accelerates glycolysis, the pentose phosphate cycle, and glycogen synthesis in liver. The polypeptide is Insulin (INS) (Ovis aries (Sheep)).